Consider the following 314-residue polypeptide: tRNA pseudouridine synthase B (314 aa).

His43 is a binding site for substrate. The Nucleophile role is filled by Asp48. Tyr76, Tyr179, and Leu200 together coordinate substrate.

This sequence belongs to the pseudouridine synthase TruB family. Type 1 subfamily.

It catalyses the reaction uridine(55) in tRNA = pseudouridine(55) in tRNA. Responsible for synthesis of pseudouridine from uracil-55 in the psi GC loop of transfer RNAs. The protein is tRNA pseudouridine synthase B of Salmonella arizonae (strain ATCC BAA-731 / CDC346-86 / RSK2980).